A 467-amino-acid chain; its full sequence is UDP-glycosyltransferase 90A2 (467 aa).

UDP-alpha-D-glucose is bound by residues S289, V341–Q343, H358–E366, and A380–Q383.

It belongs to the UDP-glycosyltransferase family.

This Arabidopsis thaliana (Mouse-ear cress) protein is UDP-glycosyltransferase 90A2 (UGT90A2).